The chain runs to 164 residues: UPF0303 protein RHECIAT_CH0003058 (164 aa).

It belongs to the UPF0303 family.

This chain is UPF0303 protein RHECIAT_CH0003058, found in Rhizobium etli (strain CIAT 652).